A 477-amino-acid chain; its full sequence is ATP synthase subunit beta (477 aa).

148 to 155 (GGAGVGKT) contacts ATP.

The protein belongs to the ATPase alpha/beta chains family. In terms of assembly, F-type ATPases have 2 components, CF(1) - the catalytic core - and CF(0) - the membrane proton channel. CF(1) has five subunits: alpha(3), beta(3), gamma(1), delta(1), epsilon(1). CF(0) has three main subunits: a(1), b(2) and c(9-12). The alpha and beta chains form an alternating ring which encloses part of the gamma chain. CF(1) is attached to CF(0) by a central stalk formed by the gamma and epsilon chains, while a peripheral stalk is formed by the delta and b chains.

It is found in the cell inner membrane. It catalyses the reaction ATP + H2O + 4 H(+)(in) = ADP + phosphate + 5 H(+)(out). Its function is as follows. Produces ATP from ADP in the presence of a proton gradient across the membrane. The catalytic sites are hosted primarily by the beta subunits. This is ATP synthase subunit beta from Psychrobacter arcticus (strain DSM 17307 / VKM B-2377 / 273-4).